The chain runs to 1069 residues: Regulator of nonsense transcripts 1 (1069 aa).

The segment at 1-86 (MDDSDDEYSR…SEKSLTEEQH (86 aa)) is disordered. Residues 28 to 50 (IGNTQDSQFAYEQFSVPTQSSQA) are compositionally biased toward polar residues. Over residues 51 to 65 (TDLLPGGTDGTTNDL) the composition is skewed to low complexity. The span at 77 to 86 (SEKSLTEEQH) shows a compositional bias: basic and acidic residues. One can recognise a Upf1 CH-rich domain in the interval 87-244 (EQKLPEHACR…VRMEELWRDH (158 aa)). Cysteine 95, cysteine 98, cysteine 109, cysteine 112, cysteine 117, histidine 127, histidine 131, histidine 137, cysteine 155, cysteine 158, cysteine 181, and cysteine 185 together coordinate Zn(2+). The C3H stretch occupies residues 95–127 (CRYCGISDPLCVAKCTVCRKWFCNSNDGTSGGH). Residues 109–137 (CTVCRKWFCNSNDGTSGGHIVHHMVRSQH) form a CC/SHH/C region. The interval 155–185 (CYRCGSKNVFNLGFIPGKKDQVVVIICRTPC) is C4. ATP-binding positions include glutamine 450, 467-474 (GPPGTGKT), glutamine 639, tyrosine 676, and glutamate 807. Residues 966–1069 (ARNQKDRRRG…MDDLLFSQDC (104 aa)) form a disordered region. Positions 991 to 1013 (SQGMMSQQSQQYPPQGASSQSQY) are enriched in low complexity.

It belongs to the DNA2/NAM7 helicase family. Post-translationally, phosphorylated probably by smg-1. Smg-3 and smg-4 are required for phosphorylation.

Its subcellular location is the cytoplasm. It catalyses the reaction ATP + H2O = ADP + phosphate + H(+). RNA-dependent helicase required for nonsense-mediated decay (NMD) of aberrant mRNAs containing premature stop codons and modulates the expression level of normal mRNAs. Is recruited to mRNAs upon translation termination and undergoes a cycle of phosphorylation and dephosphorylation; its phosphorylation appears to be a key step in NMD. The formation of an smg-2-3-4 surveillance complex is believed to activate NMD. This is Regulator of nonsense transcripts 1 (smg-2) from Caenorhabditis elegans.